A 228-amino-acid polypeptide reads, in one-letter code: Small ribosomal subunit protein uS3 (228 aa).

Residues 39-107 enclose the KH type-2 domain; it reads TREYLQDKLK…PVHINIEEIR (69 aa).

Belongs to the universal ribosomal protein uS3 family. In terms of assembly, part of the 30S ribosomal subunit. Forms a tight complex with proteins S10 and S14.

In terms of biological role, binds the lower part of the 30S subunit head. Binds mRNA in the 70S ribosome, positioning it for translation. The protein is Small ribosomal subunit protein uS3 of Pseudomonas putida (strain ATCC 700007 / DSM 6899 / JCM 31910 / BCRC 17059 / LMG 24140 / F1).